The sequence spans 87 residues: MANTPQAKKRIRRNQARAVVNKNRVSRIRTLVKKVEAAVAAGDKDAAATALKAAQPEMARGVAKGVLHKNTVARKYSRLTKSVNAIA.

This sequence belongs to the bacterial ribosomal protein bS20 family.

Binds directly to 16S ribosomal RNA. The sequence is that of Small ribosomal subunit protein bS20 from Sphingopyxis alaskensis (strain DSM 13593 / LMG 18877 / RB2256) (Sphingomonas alaskensis).